The sequence spans 403 residues: Cytochrome P450-SU2 (403 aa).

The segment at 1-24 is disordered; sequence MTTAERTAPPDALTVPASRAPGCP. Residue C352 participates in heme binding.

It belongs to the cytochrome P450 family. The cofactor is heme.

Its function is as follows. Metabolism of a number of sulfonylurea herbicides. This Streptomyces griseolus protein is Cytochrome P450-SU2 (cyp105B1).